A 345-amino-acid polypeptide reads, in one-letter code: MVSFASTLPSLVSFIPSPSSITNASRNPPQPGMICCKFRSELNNEDRFHRRDILQSVGAAVGMDLIARSSAFIEVANAADLIQRRQRSDFQSKIKLTLYDAIKANPDIIPSLLTLALNDAITYDKATKTGGPNGSIRFSSEISRPENKGLDAALNLLEESKKVIDLDSKGGPISYADLIQFAAQSAVKSTFIASAISKCGGNVEKGTLLYSAYGSNGQWGQFDRIFGRSDAQEPDPEGRVPQWDKASVQEMKDKFKAVGLGPRQLAVMSSFLGPDQAATEALLASDPEVLPWIQKYQRSRETVSRTDYEVDLITTVTKLSSLGQVINYEAYTYPPRKIDVTKLKL.

It belongs to the peroxidase family.

It is found in the plastid. It localises to the chloroplast thylakoid lumen. The sequence is that of Thylakoid lumenal 29 kDa protein, chloroplastic (CLEB3J9) from Solanum lycopersicum (Tomato).